A 267-amino-acid polypeptide reads, in one-letter code: L-aspartate dehydrogenase (267 aa).

NAD(+) is bound by residues Ala124 and Asn190. His218 is a catalytic residue.

It belongs to the L-aspartate dehydrogenase family.

The enzyme catalyses L-aspartate + NADP(+) + H2O = oxaloacetate + NH4(+) + NADPH + H(+). It catalyses the reaction L-aspartate + NAD(+) + H2O = oxaloacetate + NH4(+) + NADH + H(+). Its pathway is cofactor biosynthesis; NAD(+) biosynthesis; iminoaspartate from L-aspartate (dehydrogenase route): step 1/1. Functionally, specifically catalyzes the NAD or NADP-dependent dehydrogenation of L-aspartate to iminoaspartate. The sequence is that of L-aspartate dehydrogenase from Methanocaldococcus jannaschii (strain ATCC 43067 / DSM 2661 / JAL-1 / JCM 10045 / NBRC 100440) (Methanococcus jannaschii).